The sequence spans 120 residues: Large ribosomal subunit protein uL18 (120 aa).

The protein belongs to the universal ribosomal protein uL18 family. Part of the 50S ribosomal subunit; part of the 5S rRNA/L5/L18/L25 subcomplex. Contacts the 5S and 23S rRNAs.

In terms of biological role, this is one of the proteins that bind and probably mediate the attachment of the 5S RNA into the large ribosomal subunit, where it forms part of the central protuberance. This chain is Large ribosomal subunit protein uL18, found in Treponema denticola (strain ATCC 35405 / DSM 14222 / CIP 103919 / JCM 8153 / KCTC 15104).